The following is a 195-amino-acid chain: ATP-dependent Clp protease proteolytic subunit (195 aa).

The active-site Nucleophile is the serine 97. Residue histidine 122 is part of the active site.

Belongs to the peptidase S14 family. In terms of assembly, fourteen ClpP subunits assemble into 2 heptameric rings which stack back to back to give a disk-like structure with a central cavity, resembling the structure of eukaryotic proteasomes.

Its subcellular location is the cytoplasm. The enzyme catalyses Hydrolysis of proteins to small peptides in the presence of ATP and magnesium. alpha-casein is the usual test substrate. In the absence of ATP, only oligopeptides shorter than five residues are hydrolyzed (such as succinyl-Leu-Tyr-|-NHMec, and Leu-Tyr-Leu-|-Tyr-Trp, in which cleavage of the -Tyr-|-Leu- and -Tyr-|-Trp bonds also occurs).. Cleaves peptides in various proteins in a process that requires ATP hydrolysis. Has a chymotrypsin-like activity. Plays a major role in the degradation of misfolded proteins. This is ATP-dependent Clp protease proteolytic subunit from Campylobacter hominis (strain ATCC BAA-381 / DSM 21671 / CCUG 45161 / LMG 19568 / NCTC 13146 / CH001A).